The sequence spans 61 residues: Metallothionein-1H (61 aa).

Position 1 is an N-acetylmethionine (M1). The segment at 1 to 29 (MDPNCSCEAGGSCACAGSCKCKKCKCTSC) is beta. 18 residues coordinate a divalent metal cation: C5, C7, C13, C15, C19, C21, C24, C26, C29, C33, C34, C36, C37, C41, C44, C48, C50, and C57. The segment at 30–61 (KKSCCSCCPLGCAKCAQGCICKGASEKCSCCA) is alpha. S58 carries the phosphoserine modification. A divalent metal cation is bound by residues C59 and C60.

The protein belongs to the metallothionein superfamily. Type 1 family. Monomer.

Functionally, metallothioneins have a high content of cysteine residues that bind various heavy metals; these proteins are transcriptionally regulated by both heavy metals and glucocorticoids. This chain is Metallothionein-1H (MT1H), found in Homo sapiens (Human).